The chain runs to 608 residues: Mitogen-activated protein kinase kinase kinase 1 (608 aa).

Residues 1 to 13 are compositionally biased toward basic residues; sequence MDRILARMKKSTG. The tract at residues 1–20 is disordered; the sequence is MDRILARMKKSTGRRGGDKN. The segment at 1–325 is regulatory region; the sequence is MDRILARMKK…VSNTSPIYPD (325 aa). Serine 62 carries the phosphoserine modification. The tract at residues 192 to 234 is binding with MPK4; that stretch reads MERTPTIVKSKGYLVPNNVVAVGVGVGGGIKGLRPPVLKPPPA. Disordered regions lie at residues 228-247 and 256-287; these read VLKP…GSSW and SETV…EAEE. Residues 271–287 are compositionally biased toward acidic residues; sequence DGCDEEEGKEEEAEAEE. The region spanning 333 to 587 is the Protein kinase domain; sequence WQKGQLLGRG…AAELLNHPFV (255 aa). Residues 339–347 and lysine 361 contribute to the ATP site; that span reads LGRGSFGSV. The active-site Proton acceptor is the aspartate 456. Serine 603 carries the phosphoserine modification.

This sequence belongs to the protein kinase superfamily. STE Ser/Thr protein kinase family. MAP kinase kinase kinase subfamily. Interacts with MKK1, MMK2 and MPK4. May form a ternary complex composed of MEKK1 and MKK1/MKK2 and MPK4. Interacts with RACK1A, RACK1B and RACK1C. Binds to CRLK1. Phosphorylated by CRLK1 in response to cold.

The protein resides in the cell membrane. Its subcellular location is the endosome. It catalyses the reaction L-seryl-[protein] + ATP = O-phospho-L-seryl-[protein] + ADP + H(+). It carries out the reaction L-threonyl-[protein] + ATP = O-phospho-L-threonyl-[protein] + ADP + H(+). Its activity is regulated as follows. Activated by cold via CRLK1-mediated phosphorylation and leading to elevated kinase activity towards MKK2. The MEKK1, MKK1/MKK2 and MPK4 function in a signaling pathway that modulates the expression of genes responding to biotic and abiotic stresses and also plays an important role in pathogen defense by negatively regulating innate immunity. Involved in the innate immune MAP kinase signaling cascade (MEKK1, MKK4/MKK5 and MPK3/MPK6) downstream of bacterial flagellin receptor FLS2. May be involved in the cold and salinity stress-mediated MAP kinase signaling cascade (MEKK1, MKK1/MKK2 and MPK4/MPK6). Activates by phosphorylation the downstream MKK2, MKK4 and MKK5 in a calcium-dependent manner. In Arabidopsis thaliana (Mouse-ear cress), this protein is Mitogen-activated protein kinase kinase kinase 1 (MEKK1).